The following is a 249-amino-acid chain: Probable transglycosylase SceD 2 (249 aa).

The signal sequence occupies residues 1–27 (MKKTVIASTLAVGLGVTGIAAGNSADA). 2 stretches are compositionally biased toward low complexity: residues 80–95 (WSYG…ASSE) and 103–171 (QQTA…SSSS). The interval 80–203 (WSYGEGSGEG…PSSGASGKFQ (124 aa)) is disordered. 2 stretches are compositionally biased toward polar residues: residues 172–182 (GVNAHLQQIAQ) and 192–203 (TNPSSGASGKFQ).

Belongs to the transglycosylase family. SceD subfamily.

The protein resides in the secreted. Is able to cleave peptidoglycan and affects clumping and separation of bacterial cells. This chain is Probable transglycosylase SceD 2 (sceD2), found in Staphylococcus saprophyticus subsp. saprophyticus (strain ATCC 15305 / DSM 20229 / NCIMB 8711 / NCTC 7292 / S-41).